Here is a 225-residue protein sequence, read N- to C-terminus: Uracil-DNA glycosylase (225 aa).

Catalysis depends on Asp-65, which acts as the Proton acceptor.

The protein belongs to the uracil-DNA glycosylase (UDG) superfamily. UNG family.

The protein resides in the cytoplasm. The enzyme catalyses Hydrolyzes single-stranded DNA or mismatched double-stranded DNA and polynucleotides, releasing free uracil.. Excises uracil residues from the DNA which can arise as a result of misincorporation of dUMP residues by DNA polymerase or due to deamination of cytosine. The sequence is that of Uracil-DNA glycosylase from Alkaliphilus oremlandii (strain OhILAs) (Clostridium oremlandii (strain OhILAs)).